A 330-amino-acid polypeptide reads, in one-letter code: MAYHTPFAAQPPVASSGLPLTLISLDDWALVTLTGADRVKYLQGQVTADIDALSADQHVLCAHCDAKGKMWSNLRLFYRGEGLAFIERRSLLDNQLSELKKYAVFSKVVIAPQPDAVLIGVAGSQAKTALAEIFTELPSAEHPVTQMGNSTLLHFSLPAERFLLVTDTEQAQQLVEKLAGRAQFNDSKQWLALDIEAGFPIIDAANSAQFIPQATNIQALNGISFTKGCYTGQEMVARAKYRGANKRALYWLAGNASRVPAAGEDLEWQLGENWRRTGTVLSAIQLNDGTVWVQAVLNNDLAADSVLRVRDDALGTLAIQPLPYSLAEDK.

Positions 28 and 190 each coordinate folate.

This sequence belongs to the tRNA-modifying YgfZ family.

The protein resides in the cytoplasm. Functionally, folate-binding protein involved in regulating the level of ATP-DnaA and in the modification of some tRNAs. It is probably a key factor in regulatory networks that act via tRNA modification, such as initiation of chromosomal replication. The chain is tRNA-modifying protein YgfZ from Yersinia pseudotuberculosis serotype O:1b (strain IP 31758).